Here is a 393-residue protein sequence, read N- to C-terminus: Acetate kinase (393 aa).

Residue Asn7 coordinates Mg(2+). Lys14 is a binding site for ATP. Arg89 serves as a coordination point for substrate. The Proton donor/acceptor role is filled by Asp146. ATP is bound by residues 204–208, 279–281, and 327–331; these read HIGNG, DSR, and GIGEN. Glu379 lines the Mg(2+) pocket.

This sequence belongs to the acetokinase family. Homodimer. It depends on Mg(2+) as a cofactor. Requires Mn(2+) as cofactor.

It localises to the cytoplasm. It carries out the reaction acetate + ATP = acetyl phosphate + ADP. It functions in the pathway metabolic intermediate biosynthesis; acetyl-CoA biosynthesis; acetyl-CoA from acetate: step 1/2. Functionally, catalyzes the formation of acetyl phosphate from acetate and ATP. Can also catalyze the reverse reaction. This chain is Acetate kinase, found in Acholeplasma laidlawii (strain PG-8A).